A 417-amino-acid polypeptide reads, in one-letter code: Gamma-glutamyl phosphate reductase (417 aa).

This sequence belongs to the gamma-glutamyl phosphate reductase family.

It localises to the cytoplasm. The enzyme catalyses L-glutamate 5-semialdehyde + phosphate + NADP(+) = L-glutamyl 5-phosphate + NADPH + H(+). The protein operates within amino-acid biosynthesis; L-proline biosynthesis; L-glutamate 5-semialdehyde from L-glutamate: step 2/2. Catalyzes the NADPH-dependent reduction of L-glutamate 5-phosphate into L-glutamate 5-semialdehyde and phosphate. The product spontaneously undergoes cyclization to form 1-pyrroline-5-carboxylate. The sequence is that of Gamma-glutamyl phosphate reductase from Legionella pneumophila (strain Lens).